A 405-amino-acid polypeptide reads, in one-letter code: Argininosuccinate synthase (405 aa).

ATP is bound by residues 10–18 and A37; that span reads AYSGGLDTS. Y88 and S93 together coordinate L-citrulline. ATP is bound at residue G118. 3 residues coordinate L-aspartate: T120, N124, and D125. N124 lines the L-citrulline pocket. R128, S179, S188, E264, and Y276 together coordinate L-citrulline.

Belongs to the argininosuccinate synthase family. Type 1 subfamily. Homotetramer.

The protein localises to the cytoplasm. It carries out the reaction L-citrulline + L-aspartate + ATP = 2-(N(omega)-L-arginino)succinate + AMP + diphosphate + H(+). It functions in the pathway amino-acid biosynthesis; L-arginine biosynthesis; L-arginine from L-ornithine and carbamoyl phosphate: step 2/3. This Ectopseudomonas mendocina (strain ymp) (Pseudomonas mendocina) protein is Argininosuccinate synthase.